A 279-amino-acid chain; its full sequence is MPEDISRYLFICFKSIFLGIIQGFTEFLPISSTAHLKVVPYLFGWNDLGVSFSASIQLGSAVAIIYYFRNHISLIINSFFSSFNPSKGFKDENSRLFLYIFVASIPILVFGLLIKLYWPNYSDSNLRGLFSIAITSIVMALLLALSEIYGKRNKLFVDINLNDVIKLGLAQSLALFPGVSRSGITLTSALFSGIERKTAARLSFLVGIPAVSISGLVELFSLFRVLSVIDIIPIIIGIISSFFSSIFAIDLFLKFLSKNNTLVFVYYRLAFGIFILTTL.

7 helical membrane-spanning segments follow: residues 10-30 (FICF…FLPI), 48-68 (LGVS…IYYF), 96-116 (LFLY…LIKL), 128-148 (GLFS…LSEI), 203-223 (SFLV…FSLF), 229-249 (IDII…IFAI), and 259-279 (NNTL…LTTL).

It belongs to the UppP family.

The protein resides in the cell inner membrane. It catalyses the reaction di-trans,octa-cis-undecaprenyl diphosphate + H2O = di-trans,octa-cis-undecaprenyl phosphate + phosphate + H(+). In terms of biological role, catalyzes the dephosphorylation of undecaprenyl diphosphate (UPP). Confers resistance to bacitracin. The chain is Undecaprenyl-diphosphatase from Prochlorococcus marinus (strain NATL2A).